A 39-amino-acid chain; its full sequence is Gonadal protein gdl-ORF39 (39 aa).

In terms of tissue distribution, in bundles of maturing sperm of larval, pupal and adult males.

In Drosophila melanogaster (Fruit fly), this protein is Gonadal protein gdl-ORF39 (gdl-ORF39).